A 308-amino-acid polypeptide reads, in one-letter code: MSVTIEDIIKDLELEVINKGKNVNEINVSDINRPGLQFSGFYNYYANERVQIVGKAEWSFLDAMQPDLRKKRLEKYFEFDNPGTIVTRGLIPHKEFLESAIKNKRWILRTNNISTRFINRLMNYLDVKLAPETRLHGVLMDVYGIGILITGESGIGKSETALELIKRGHRLVADDAVDVKQIDGVLNGTSPYITSGMIEVRGMGIIDISALYGLSSVLKTKNIGLVICLEQWKKDENYDRLGIDKEYMDILNVPVRKLKIPIRPGRNLAVIIEAAAANYRYSLVSDVTPVDVISERIQELRKEDGGDE.

Active-site residues include histidine 136 and lysine 157. Residue 151-158 (GESGIGKS) coordinates ATP. Serine 158 is a Mg(2+) binding site. The Proton acceptor; for phosphorylation activity. Proton donor; for dephosphorylation activity role is filled by aspartate 175. Positions 198-207 (IEVRGMGIID) are important for the catalytic mechanism of both phosphorylation and dephosphorylation. Residue glutamate 199 coordinates Mg(2+). The active site involves arginine 240. An important for the catalytic mechanism of dephosphorylation region spans residues 261 to 266 (PIRPGR).

This sequence belongs to the HPrK/P family. In terms of assembly, homohexamer. Mg(2+) is required as a cofactor.

It catalyses the reaction [HPr protein]-L-serine + ATP = [HPr protein]-O-phospho-L-serine + ADP + H(+). The catalysed reaction is [HPr protein]-O-phospho-L-serine + phosphate + H(+) = [HPr protein]-L-serine + diphosphate. Functionally, catalyzes the ATP- as well as the pyrophosphate-dependent phosphorylation of a specific serine residue in HPr, a phosphocarrier protein of the phosphoenolpyruvate-dependent sugar phosphotransferase system (PTS). HprK/P also catalyzes the pyrophosphate-producing, inorganic phosphate-dependent dephosphorylation (phosphorolysis) of seryl-phosphorylated HPr (P-Ser-HPr). The two antagonistic activities of HprK/P are regulated by several intracellular metabolites, which change their concentration in response to the absence or presence of rapidly metabolisable carbon sources (glucose, fructose, etc.) in the growth medium. Therefore, by controlling the phosphorylation state of HPr, HPrK/P is a sensor enzyme that plays a major role in the regulation of carbon metabolism and sugar transport: it mediates carbon catabolite repression (CCR), and regulates PTS-catalyzed carbohydrate uptake and inducer exclusion. The sequence is that of HPr kinase/phosphorylase from Clostridium kluyveri (strain NBRC 12016).